We begin with the raw amino-acid sequence, 66 residues long: Large ribosomal subunit protein uL29 (66 aa).

This sequence belongs to the universal ribosomal protein uL29 family.

In Thermosipho melanesiensis (strain DSM 12029 / CIP 104789 / BI429), this protein is Large ribosomal subunit protein uL29.